Consider the following 166-residue polypeptide: SsrA-binding protein (166 aa).

The segment at 146-166 is disordered; that stretch reads KRAAEKEKQSKKDVKAAMERY.

This sequence belongs to the SmpB family.

It localises to the cytoplasm. Required for rescue of stalled ribosomes mediated by trans-translation. Binds to transfer-messenger RNA (tmRNA), required for stable association of tmRNA with ribosomes. tmRNA and SmpB together mimic tRNA shape, replacing the anticodon stem-loop with SmpB. tmRNA is encoded by the ssrA gene; the 2 termini fold to resemble tRNA(Ala) and it encodes a 'tag peptide', a short internal open reading frame. During trans-translation Ala-aminoacylated tmRNA acts like a tRNA, entering the A-site of stalled ribosomes, displacing the stalled mRNA. The ribosome then switches to translate the ORF on the tmRNA; the nascent peptide is terminated with the 'tag peptide' encoded by the tmRNA and targeted for degradation. The ribosome is freed to recommence translation, which seems to be the essential function of trans-translation. The chain is SsrA-binding protein from Synechococcus sp. (strain CC9605).